The sequence spans 185 residues: Ribosome-recycling factor (185 aa).

The tract at residues 138-185 (ALKKQEKDGEITEDEERRLEKEVQKVTDESTKKIDQMADNKRKEIIQG) is disordered.

Belongs to the RRF family.

It is found in the cytoplasm. Its function is as follows. Responsible for the release of ribosomes from messenger RNA at the termination of protein biosynthesis. May increase the efficiency of translation by recycling ribosomes from one round of translation to another. The sequence is that of Ribosome-recycling factor from Lactobacillus delbrueckii subsp. bulgaricus (strain ATCC 11842 / DSM 20081 / BCRC 10696 / JCM 1002 / NBRC 13953 / NCIMB 11778 / NCTC 12712 / WDCM 00102 / Lb 14).